An 826-amino-acid chain; its full sequence is Dolichyl-diphosphooligosaccharide--protein glycosyltransferase subunit STT3B (826 aa).

Residues 1–60 form a disordered region; that stretch reads MAEPSAPESKHKSSLNSSPWSGLMALGNSRHGHHGPGAQCAHKAAGGVAPPKPAPAGLSG. Residue A2 is modified to N-acetylalanine. Topologically, residues 2 to 41 are cytoplasmic; that stretch reads AEPSAPESKHKSSLNSSPWSGLMALGNSRHGHHGPGAQCA. Phosphoserine is present on residues S13, S18, and S29. Residues 42 to 86 traverse the membrane as a helical segment; that stretch reads HKAAGGVAPPKPAPAGLSGGLSQPAGWQSLLSFTILFLAWLAGFS. The Lumenal portion of the chain corresponds to 87–173; that stretch reads SRLFAVIRFE…VHIRDVCVFL (87 aa). The DXD motif 1 signature appears at 101-103; it reads EFD. D103 contributes to the Mn(2+) binding site. A helical transmembrane segment spans residues 174–192; that stretch reads APTFSGLTSISTFLLTREL. Residues 193-194 are Cytoplasmic-facing; it reads WN. Residues 195-212 form a helical membrane-spanning segment; it reads QGAGLLAACFIAIVPGYI. The Lumenal portion of the chain corresponds to 213–223; sequence SRSVAGSFDNE. 2 residues coordinate Mn(2+): D221 and E223. A DXD motif 2 motif is present at residues 221 to 223; it reads DNE. A helical membrane pass occupies residues 224–243; the sequence is GIAIFALQFTYYLWVKSVKT. Residues 244–245 are Cytoplasmic-facing; the sequence is GS. The helical transmembrane segment at 246-260 threads the bilayer; the sequence is VFWTMCCCLSYFYMV. Residues 261–265 lie on the Lumenal side of the membrane; that stretch reads SAWGG. A helical transmembrane segment spans residues 266-282; it reads YVFIINLIPLHVFVLLL. At 283–287 the chain is on the cytoplasmic side; it reads MQRYS. The helical transmembrane segment at 288 to 313 threads the bilayer; it reads KRVYIAYSTFYIVGLILSMQIPFVGF. At 314–321 the chain is on the lumenal side; sequence QPIRTSEH. A helical membrane pass occupies residues 322 to 341; it reads MAAAGVFALLQAYAFLQYLR. Topologically, residues 342–350 are cytoplasmic; the sequence is DRLTKQEFQ. The chain crosses the membrane as a helical span at residues 351–371; that stretch reads TLFFLGVSLAAGAVFLSVIYL. Residues 372–410 are Lumenal-facing; it reads TYTGYIAPWSGRFYSLWDTGYAKIHIPIIASVSEHQPTT. An SVSE motif motif is present at residues 402 to 405; sequence SVSE. A helical membrane pass occupies residues 411–433; sequence WVSFFFDLHILVCTFPAGLWFCI. Over 434–439 the chain is Cytoplasmic; sequence KNINDE. A helical transmembrane segment spans residues 440 to 456; that stretch reads RVFVALYAISAVYFAGV. Residues 457-460 are Lumenal-facing; sequence MVRL. R459 contributes to the dolichyl diphosphooligosaccharide binding site. A helical membrane pass occupies residues 461–482; it reads MLTLTPVVCMLSAIAFSNVFEH. Topologically, residues 483-526 are cytoplasmic; sequence YLGDDMKRENPPVEDSSDEDDKRNPGNLYDKAGKVRKHVTEQEK. A disordered region spans residues 490–512; sequence RENPPVEDSSDEDDKRNPGNLYD. 2 positions are modified to phosphoserine: S498 and S499. Residues 527-552 form a helical membrane-spanning segment; it reads TEEGLGPNIKSIVTMLMLMLLMMFAV. The Lumenal segment spans residues 553-826; sequence HCTWVTSNAY…KGKKISKKTV (274 aa). An interacts with target acceptor peptide in protein substrate region spans residues 604–606; that stretch reads WWD. The WWDYG motif signature appears at 604–608; that stretch reads WWDYG. Y609 contributes to the dolichyl diphosphooligosaccharide binding site. N-linked (GlcNAc...) asparagine glycosylation is found at N616 and N623. N627 carries N-linked (GlcNAc...) (high mannose) asparagine glycosylation. N641 carries N-linked (GlcNAc...) asparagine glycosylation. The DK motif signature appears at 671–678; the sequence is DINKFLWM.

The protein belongs to the STT3 family. Component of the oligosaccharyltransferase (OST) complex. There are 2 OST complexes, OST-A and OST-B, which contain STT3A or STT3B as catalytic subunit, respectively. OST-A and OST-B contain common core subunits RPN1, RPN2, OST48, OST4, DAD1 and TMEM258, and OST-B contains either MAGT1 or TUSC3 as specific accessory subunit. Requires Mg(2+) as cofactor. Mn(2+) is required as a cofactor.

The protein resides in the endoplasmic reticulum. The protein localises to the endoplasmic reticulum membrane. The enzyme catalyses a di-trans,poly-cis-dolichyl diphosphooligosaccharide + L-asparaginyl-[protein] = N(4)-(oligosaccharide-(1-&gt;4)-N-acetyl-beta-D-glucosaminyl-(1-&gt;4)-N-acetyl-beta-D-glucosaminyl)-L-asparaginyl-[protein] + a di-trans,poly-cis-dolichyl diphosphate + H(+). It functions in the pathway protein modification; protein glycosylation. Functionally, catalytic subunit of the oligosaccharyl transferase (OST) complex that catalyzes the initial transfer of a defined glycan (Glc(3)Man(9)GlcNAc(2) in eukaryotes) from the lipid carrier dolichol-pyrophosphate to an asparagine residue within an Asn-X-Ser/Thr consensus motif in nascent polypeptide chains, the first step in protein N-glycosylation. N-glycosylation occurs cotranslationally and the complex associates with the Sec61 complex at the channel-forming translocon complex that mediates protein translocation across the endoplasmic reticulum (ER). All subunits are required for a maximal enzyme activity. This subunit contains the active site and the acceptor peptide and donor lipid-linked oligosaccharide (LLO) binding pockets. STT3B is present in a small subset of OST complexes and mediates both cotranslational and post-translational N-glycosylation of target proteins: STT3B-containing complexes are required for efficient post-translational glycosylation and while they are less competent than STT3A-containing complexes for cotranslational glycosylation, they have the ability to mediate glycosylation of some nascent sites that are not accessible for STT3A. STT3B-containing complexes also act post-translationally and mediate modification of skipped glycosylation sites in unfolded proteins. Plays a role in ER-associated degradation (ERAD) pathway that mediates ubiquitin-dependent degradation of misfolded endoplasmic reticulum proteins by mediating N-glycosylation of unfolded proteins, which are then recognized by the ERAD pathway and targeted for degradation. The polypeptide is Dolichyl-diphosphooligosaccharide--protein glycosyltransferase subunit STT3B (Canis lupus familiaris (Dog)).